The following is a 233-amino-acid chain: Large ribosomal subunit protein uL1 (233 aa).

Belongs to the universal ribosomal protein uL1 family. In terms of assembly, part of the 50S ribosomal subunit.

In terms of biological role, binds directly to 23S rRNA. The L1 stalk is quite mobile in the ribosome, and is involved in E site tRNA release. Its function is as follows. Protein L1 is also a translational repressor protein, it controls the translation of the L11 operon by binding to its mRNA. The chain is Large ribosomal subunit protein uL1 from Shewanella amazonensis (strain ATCC BAA-1098 / SB2B).